A 782-amino-acid polypeptide reads, in one-letter code: Shutoff protein (782 aa).

The interval 262 to 329 (VMNQLLIKRA…AVLVTVELEC (68 aa)) is binding to host EIF4G. An RRM domain is found at 332-450 (RFFSDITTLR…SLWTGFDERT (119 aa)). Y349 and Y665 each carry phosphotyrosine; by host. The disordered stretch occupies residues 715-760 (GGRILGESGRGRGRGLGRMGGGGGGQPRRGSRGGGGRFQGRSDRRQ). Positions 728-752 (RGLGRMGGGGGGQPRRGSRGGGGRF) are enriched in gly residues.

The protein belongs to the adenoviridae shutoff protein family. Monomer. Interacts with hexon protein; this interaction allows chaperoning and trimerization of hexon proteins. Interacts (via N-terminus) with host initiation factor EIF4G (via C-terminus). Interacts (via RRM domain) with viral mRNAs that contain the tripartite leader; this interaction allows ribosome shunting and expression of viral late mRNAs. Might be cleaved by the viral protease. In terms of processing, phosphorylated. Tyrosine phosphorylation enhances preferential binding to tripartite leader mRNAs and allows ribosome shunting. Post-translationally, methylated. Asymmetric dimethylation by host PRMT1 of the Arg/Gly-rich region may regulate shutoff protein binding to hexon and promote the capsid assembly in the nucleus.

It localises to the host cytoplasm. Its function is as follows. Protein that inhibits host translation while promoting late viral translation by ribosome shunting. Blocks host cap-dependent translation by binding to eIF4G, displacing MKNK1 from cap initiation complexes and preventing EIF4E phosphorylation. Binds to the tripartite leader sequence of viral late mRNAs and recruits host eIF4G, PABPC1/poly-A binding protein and 40S ribosomes subunits on viral mRNAs, allowing ribosome shunting and efficient translation of late viral mRNAs even though conventional translation via ribosome scanning from the cap has been shut off in the host cell. During assembly, acts as a chaperone protein that helps hexon proteins assembly into trimers. The polypeptide is Shutoff protein (Human adenovirus A serotype 12 (HAdV-12)).